Consider the following 219-residue polypeptide: Ribose-5-phosphate isomerase A (219 aa).

Substrate is bound by residues 28–31, 81–84, and 94–97; these read TGST, DGAD, and KGGG. E103 serves as the catalytic Proton acceptor. K121 is a binding site for substrate.

Belongs to the ribose 5-phosphate isomerase family. As to quaternary structure, homodimer.

The enzyme catalyses aldehydo-D-ribose 5-phosphate = D-ribulose 5-phosphate. Its pathway is carbohydrate degradation; pentose phosphate pathway; D-ribose 5-phosphate from D-ribulose 5-phosphate (non-oxidative stage): step 1/1. Its function is as follows. Catalyzes the reversible conversion of ribose-5-phosphate to ribulose 5-phosphate. The sequence is that of Ribose-5-phosphate isomerase A from Photobacterium profundum (strain SS9).